Consider the following 120-residue polypeptide: Large ribosomal subunit protein bL19 (120 aa).

The protein belongs to the bacterial ribosomal protein bL19 family.

Functionally, this protein is located at the 30S-50S ribosomal subunit interface and may play a role in the structure and function of the aminoacyl-tRNA binding site. The chain is Large ribosomal subunit protein bL19 from Gloeothece citriformis (strain PCC 7424) (Cyanothece sp. (strain PCC 7424)).